We begin with the raw amino-acid sequence, 241 residues long: Probable transcriptional regulatory protein Neut_0281 (241 aa).

The protein belongs to the TACO1 family.

It is found in the cytoplasm. This chain is Probable transcriptional regulatory protein Neut_0281, found in Nitrosomonas eutropha (strain DSM 101675 / C91 / Nm57).